A 125-amino-acid polypeptide reads, in one-letter code: Succinate dehydrogenase cytochrome b560 subunit (125 aa).

Transmembrane regions (helical) follow at residues 29-49 (ISGVAMFTLIASPPLFLKLAT), 68-88 (ILPWFIVIISVIFLYHIINGI), and 104-124 (IIKDSNTLLALVFLIMLFKFI). Heme is bound at residue His83.

This sequence belongs to the cytochrome b560 family. In terms of assembly, forms part of complex II containing four subunits: a 70 kDa flavoprotein (FP), a 27 kDa iron-sulfur protein (IP), a cytochrome B and a membrane-anchoring protein. The cofactor is heme.

Its subcellular location is the mitochondrion inner membrane. The protein operates within carbohydrate metabolism; tricarboxylic acid cycle. In terms of biological role, membrane-anchoring subunit of succinate dehydrogenase (SDH) that is involved in complex II of the mitochondrial electron transport chain and is responsible for transferring electrons from succinate to ubiquinone (coenzyme Q). In Porphyra purpurea (Red seaweed), this protein is Succinate dehydrogenase cytochrome b560 subunit (SDH3).